A 54-amino-acid chain; its full sequence is Beta-2-microglobulin (54 aa).

Residues 3–41 (KVELSDLSFNKDWSFYLLAHREFVPTATDKYACRVSHIT) form the Ig-like C1-type domain.

It belongs to the beta-2-microglobulin family. In terms of assembly, heterodimer of an alpha chain and a beta chain. Beta-2-microglobulin is the beta-chain of major histocompatibility complex class I molecules.

It is found in the secreted. In terms of biological role, component of the class I major histocompatibility complex (MHC). Involved in the presentation of peptide antigens to the immune system. This is Beta-2-microglobulin (B2M) from Mesocricetus auratus (Golden hamster).